A 254-amino-acid polypeptide reads, in one-letter code: HTH-type transcriptional regulator GolR (254 aa).

An HTH deoR-type domain is found at 3-58 (PFERQNKIIHLLDQNNKITVPELSRILDVSISTIRNDLSALEESGMIKKVHGGAVL). A DNA-binding region (H-T-H motif) is located at residues 20 to 39 (ITVPELSRILDVSISTIRND).

In terms of biological role, involved in the glycerol metabolism. Repressor of the gol operon for glycerol metabolism. This Listeria innocua serovar 6a (strain ATCC BAA-680 / CLIP 11262) protein is HTH-type transcriptional regulator GolR.